The primary structure comprises 438 residues: Nucleolar protein 12 (438 aa).

Disordered regions lie at residues 1–28 and 60–94; these read MGET…VDPT and ANGV…LNDS. The span at 60–71 shows a compositional bias: acidic residues; it reads ANGVEEAAETIE. Residues Ser-94 and Ser-95 each carry the phosphoserine modification. A disordered region spans residues 108–146; it reads AEEDEEKDKDSAGLINDEEDKSPAKQSVLEERTSQEDVK. Over residues 135–146 the composition is skewed to basic and acidic residues; the sequence is VLEERTSQEDVK. 2 RRM domains span residues 164–262 and 270–348; these read KTVF…SVSH and RCVF…RAKS. Basic residues-rich tracts occupy residues 346–357 and 402–412; these read AKSTKPKSITRS and AKKKVNKKRKE. Disordered regions lie at residues 346–366 and 390–438; these read AKST…KTRT and EGHR…KKDK.

This sequence belongs to the RRM RBM34 family.

It is found in the nucleus. It localises to the nucleolus. Involved in pre-25S rRNA processing. The chain is Nucleolar protein 12 (nop12) from Schizosaccharomyces pombe (strain 972 / ATCC 24843) (Fission yeast).